A 351-amino-acid polypeptide reads, in one-letter code: Geranylgeranyl pyrophosphate synthase (351 aa).

Lysine 55, arginine 58, and glutamine 93 together coordinate isopentenyl diphosphate. 2 residues coordinate Mg(2+): aspartate 100 and aspartate 104. Arginine 109 serves as a coordination point for dimethylallyl diphosphate. Arginine 110 lines the isopentenyl diphosphate pocket. 5 residues coordinate dimethylallyl diphosphate: lysine 196, threonine 197, glutamine 236, lysine 253, and lysine 262.

The protein belongs to the FPP/GGPP synthase family. As to quaternary structure, interacts with fps1. Requires Mg(2+) as cofactor.

It is found in the cytoplasm. The protein localises to the nucleus. It carries out the reaction isopentenyl diphosphate + dimethylallyl diphosphate = (2E)-geranyl diphosphate + diphosphate. The catalysed reaction is isopentenyl diphosphate + (2E)-geranyl diphosphate = (2E,6E)-farnesyl diphosphate + diphosphate. The enzyme catalyses isopentenyl diphosphate + (2E,6E)-farnesyl diphosphate = (2E,6E,10E)-geranylgeranyl diphosphate + diphosphate. It functions in the pathway isoprenoid biosynthesis; farnesyl diphosphate biosynthesis; farnesyl diphosphate from geranyl diphosphate and isopentenyl diphosphate: step 1/1. The protein operates within isoprenoid biosynthesis; geranyl diphosphate biosynthesis; geranyl diphosphate from dimethylallyl diphosphate and isopentenyl diphosphate: step 1/1. It participates in isoprenoid biosynthesis; geranylgeranyl diphosphate biosynthesis; geranylgeranyl diphosphate from farnesyl diphosphate and isopentenyl diphosphate: step 1/1. In terms of biological role, catalyzes the trans-addition of the 3 molecules of IPP onto DMAPP to form geranylgeranyl pyrophosphate. Required for the membrane attachment of ypt7 and rhb1. May be involved in vesicle trafficking and protein sorting. Required for forespore membrane formation. This is Geranylgeranyl pyrophosphate synthase (spo9) from Schizosaccharomyces pombe (strain 972 / ATCC 24843) (Fission yeast).